A 351-amino-acid polypeptide reads, in one-letter code: Peroxidase C1B (351 aa).

A signal peptide spans M1 to A28. 4 disulfide bridges follow: C39/C119, C72/C77, C125/C329, and C205/C237. Residue N41 is glycosylated (N-linked (GlcNAc...) asparagine). The Proton acceptor role is filled by H70. Ca(2+) contacts are provided by D71, V74, G76, D78, and S80. A glycan (N-linked (GlcNAc...) asparagine) is linked at N85. P167 is a substrate binding site. Position 198 (H198) interacts with heme b. T199 is a Ca(2+) binding site. Residues N214, N226, and N242 are each glycosylated (N-linked (GlcNAc...) asparagine). Residues D250, T253, and D258 each contribute to the Ca(2+) site. N283 is a glycosylation site (N-linked (GlcNAc...) asparagine).

This sequence belongs to the peroxidase family. Classical plant (class III) peroxidase subfamily. Ca(2+) serves as cofactor. The cofactor is heme b.

The protein resides in the secreted. The protein localises to the vacuole. The enzyme catalyses 2 a phenolic donor + H2O2 = 2 a phenolic radical donor + 2 H2O. Its function is as follows. Removal of H(2)O(2), oxidation of toxic reductants, biosynthesis and degradation of lignin, suberization, auxin catabolism, response to environmental stresses such as wounding, pathogen attack and oxidative stress. These functions might be dependent on each isozyme/isoform in each plant tissue. This is Peroxidase C1B (PRXC1B) from Armoracia rusticana (Horseradish).